Reading from the N-terminus, the 241-residue chain is E3 ubiquitin-protein ligase RNF166 (241 aa).

Positions 8–30 (VASSQHRQHHSHQSLATPSSADS) are disordered. The RING-type zinc finger occupies 37–77 (CPICLEVYYKPVAIGSCGHTFCGECLQPCLQVSSPLCPLCR). Residues cysteine 102, cysteine 105, histidine 117, and cysteine 121 each contribute to the Zn(2+) site. Residues 102–121 (CRGCSKKVTLAKMRAHISSC) form a C2HC RNF-type zinc finger. The region spanning 225–241 (DEEAALQAALALSLSEN) is the UIM domain.

The protein localises to the cytoplasm. The catalysed reaction is S-ubiquitinyl-[E2 ubiquitin-conjugating enzyme]-L-cysteine + [acceptor protein]-L-lysine = [E2 ubiquitin-conjugating enzyme]-L-cysteine + N(6)-ubiquitinyl-[acceptor protein]-L-lysine.. It participates in protein modification; protein ubiquitination. Its function is as follows. E3 ubiquitin-protein ligase that promotes the ubiquitination of different substrates. The chain is E3 ubiquitin-protein ligase RNF166 (rnf166) from Xenopus laevis (African clawed frog).